Here is a 276-residue protein sequence, read N- to C-terminus: S-adenosylmethionine-dependent nucleotide dehydratase (276 aa).

The region spanning 6–216 (TSVRKFRSAN…RRRHEDIGCI (211 aa)) is the Radical SAM core domain. Residues Cys-22, Cys-26, and Cys-29 each coordinate [4Fe-4S] cluster.

Belongs to the radical SAM superfamily. Viperin family. [4Fe-4S] cluster is required as a cofactor.

It catalyses the reaction CTP + AH2 + S-adenosyl-L-methionine = 3'-deoxy-3',4'-didehydro-CTP + 5'-deoxyadenosine + L-methionine + A + H2O + H(+). Its function is as follows. Expression of pVip50 in E.coli (strain MG1655) confers resistance to phage P1; has no effect against T7. Catalyzes the conversion of cytosine triphosphate (CTP) to 3'-deoxy-3',4'-didehydro-CTP (ddhCTP), probably via a SAM-dependent radical mechanism. The modified nucleotide represses transcription from T7 RNA polymerase-directed genes (possibly by acting as chain terminators), strongly suggesting these nucleotides block viral polymerase transcription. How this protein allows bacteria to resist viruses that do not encode their own RNA polymerase (such as lambda, P1) is unknown. The sequence is that of S-adenosylmethionine-dependent nucleotide dehydratase from Thermoplasmatales archaeon (strain ISO4-H5).